The chain runs to 236 residues: MLAEGRQVYLPPPPPSKLPRLSGTDPTDGVVTMAAPSPLVLGLGLGLGGSGSDSSGSDAEASAATVREARPPSALTFMQRQELEQQVLIYRYFAAGAPVPVHLVLPIWKSIAAASSFGPQSFPSLTGLGSLCFDYRSSMEPEPGRCRRTDGKKWRCSRDVVPGHKYCERHVHRGRGRSRKPMEASAAVAPTYLPVRPALHTVATLATSAPSLSHLGFSSASKVLLAHTTTGTTRAT.

The tract at residues 1–27 is disordered; that stretch reads MLAEGRQVYLPPPPPSKLPRLSGTDPT. The 36-residue stretch at 74–109 folds into the QLQ domain; that stretch reads ALTFMQRQELEQQVLIYRYFAAGAPVPVHLVLPIWK. One can recognise a WRC domain in the interval 140 to 184; sequence EPEPGRCRRTDGKKWRCSRDVVPGHKYCERHVHRGRGRSRKPMEA. Short sequence motifs (bipartite nuclear localization signal) lie at residues 145-155 and 173-180; these read RCRRTDGKKWR and RGRGRSRK.

Belongs to the GRF family.

It localises to the nucleus. Functionally, transcription activator that plays a regulatory role in gibberellin-induced stem elongation. The protein is Growth-regulating factor 12 (GRF12) of Oryza sativa subsp. japonica (Rice).